Consider the following 509-residue polypeptide: Major envelope glycoprotein (509 aa).

A signal peptide spans 1–17 (MVRTAVLILLLVRFSEP). N-linked (GlcNAc...) asparagine; by host glycosylation is found at asparagine 34, asparagine 156, asparagine 194, asparagine 351, asparagine 381, and asparagine 423. The O-palmitoyl serine; by host moiety is linked to residue serine 479. Residues 480–502 (FMLGHAFSFMLTVGVIIFLFCMV) form a helical membrane-spanning segment. The N-linked (GlcNAc...) asparagine; by host glycan is linked to asparagine 504.

The protein belongs to the baculoviridae gp64 family. In terms of processing, palmitoylated.

Its subcellular location is the virion membrane. It is found in the host cell membrane. Its function is as follows. Envelope phosphoglycoprotein which mediates the fusion of viral and host endosomal membranes leading to virus entry into the host cell. This is Major envelope glycoprotein (GP67) from Choristoneura fumiferana nuclear polyhedrosis virus (CfMNPV).